The sequence spans 843 residues: Aconitase AMT8-2 (843 aa).

258–260 (DSH) is a substrate binding site. [4Fe-4S] cluster contacts are provided by C450, C513, and C516. Substrate is bound by residues R536, R541, and 712–713 (SR).

It belongs to the aconitase/IPM isomerase family.

Its pathway is mycotoxin biosynthesis. Its function is as follows. Aconitase; part of the gene clusters that mediate the biosynthesis of AM-toxins, host-selective toxins (HSTs) causing Alternaria blotch on apple, a worldwide distributed disease. AM-toxins are cyclic depsipeptides containing the 3 residues 2-hydroxy-isovaleric acid (2-HIV), dehydroalanine, L-alanine which are common for all 3 AM-toxins I to III. The fourth precursor is L-alpha-amino-methoxyphenyl-valeric acid (L-Amv) for AM-toxin I, L-alpha-amino-phenyl-valeric acid (L-Apv) for AM-toxin II, and L-alpha-amino-hydroxyphenyl-valeric acid (L-Ahv) for AM-toxin III. AM-toxins have two target sites for affecting susceptible apple cells; they cause invagination of the plasma membrane and electrolyte loss and chloroplast disorganization. The non-ribosomal peptide synthetase AMT1 contains 4 catalytic modules and is responsible for activation of each residue in AM-toxin. The aldo-keto reductase AMT2 catalyzes the conversion of 2-keto-isovaleric acid (2-KIV) to 2-hydroxy-isovaleric acid (2-HIV), one of the precursor residues incorporated by AMT1 during AM-toxin biosynthesis, by reduction of its ketone to an alcohol. The cytochrome P450 monooxygenase AMT3 and the thioesterase AMT4 are also important for AM-toxin production, but their exact function within the AM-toxin biosynthesis are not known yet. Up to 21 proteins (including AMT1 to AMT4) are predicted to be involved in AM-toxin biosynthesis since their expression ishighly up-regulated in AM-toxin-producing cultures. This chain is Aconitase AMT8-2, found in Alternaria alternata (Alternaria rot fungus).